Reading from the N-terminus, the 381-residue chain is Beta-lactamase CMY-2 (381 aa).

The first 20 residues, 1–20 (MMKKSLCCALLLTASFSTFA), serve as a signal peptide directing secretion. Ser-84 serves as the catalytic Acyl-ester intermediate. Residues Ser-84, Gln-140, Tyr-170, and Asn-172 each coordinate a beta-lactam.

The protein belongs to the class-C beta-lactamase family.

The catalysed reaction is a beta-lactam + H2O = a substituted beta-amino acid. With respect to regulation, inhibited by the beta-lactamase-blocking agents sulbactam, tazobactam, avibactam and 3-aminophenylboronic acid (APB). Its function is as follows. Class C beta-lactamase which confers resistance to penicillins and cephalosporins. Has nitrocefin-, cefoxitin- and cefoperazone-hydrolyzing activities. The chain is Beta-lactamase CMY-2 from Klebsiella pneumoniae.